The primary structure comprises 461 residues: Cysteine--tRNA ligase (461 aa).

Residue Cys28 coordinates Zn(2+). Residues 30–40 carry the 'HIGH' region motif; sequence ITVYDLCHIGH. Cys209, His234, and Glu238 together coordinate Zn(2+). Positions 266 to 270 match the 'KMSKS' region motif; it reads KMSKS. Lys269 provides a ligand contact to ATP.

Belongs to the class-I aminoacyl-tRNA synthetase family. Monomer. Requires Zn(2+) as cofactor.

The protein resides in the cytoplasm. The enzyme catalyses tRNA(Cys) + L-cysteine + ATP = L-cysteinyl-tRNA(Cys) + AMP + diphosphate. This chain is Cysteine--tRNA ligase, found in Shigella flexneri.